A 194-amino-acid polypeptide reads, in one-letter code: Ribonuclease HII (194 aa).

Positions 3-193 (ILTAGVDEAG…VRNLFAQQAL (191 aa)) constitute an RNase H type-2 domain. Residues aspartate 9, glutamate 10, and aspartate 101 each contribute to the a divalent metal cation site.

The protein belongs to the RNase HII family. Mn(2+) is required as a cofactor. Mg(2+) serves as cofactor.

It localises to the cytoplasm. It carries out the reaction Endonucleolytic cleavage to 5'-phosphomonoester.. Functionally, endonuclease that specifically degrades the RNA of RNA-DNA hybrids. This Neisseria meningitidis serogroup C / serotype 2a (strain ATCC 700532 / DSM 15464 / FAM18) protein is Ribonuclease HII.